The primary structure comprises 86 residues: UPF0297 protein SH1302 (86 aa).

This sequence belongs to the UPF0297 family.

The protein is UPF0297 protein SH1302 of Staphylococcus haemolyticus (strain JCSC1435).